Here is a 459-residue protein sequence, read N- to C-terminus: 2-(3-amino-3-carboxypropyl)histidine synthase subunit 1 (459 aa).

A disordered region spans residues 1 to 68 (MEDDRAQVDL…AGANTSIEDS (68 aa)). Low complexity predominate over residues 41 to 61 (SAAAGKSSSSSSNSTSQPAGA). [4Fe-4S] cluster-binding residues include Cys165, Cys268, and Cys403.

This sequence belongs to the DPH1/DPH2 family. DPH1 subfamily. As to quaternary structure, component of the 2-(3-amino-3-carboxypropyl)histidine synthase complex composed of dph-1, dph-2, dph-3 and a NADH-dependent reductase, predominantly cbr-1. Requires [4Fe-4S] cluster as cofactor.

It is found in the cytoplasm. The catalysed reaction is L-histidyl-[translation elongation factor 2] + S-adenosyl-L-methionine = 2-[(3S)-amino-3-carboxypropyl]-L-histidyl-[translation elongation factor 2] + S-methyl-5'-thioadenosine + H(+). The protein operates within protein modification; peptidyl-diphthamide biosynthesis. Catalyzes the first step of diphthamide biosynthesis, a post-translational modification of histidine which occurs in elongation factor 2. Dph-1 and dph-2 transfer a 3-amino-3-carboxypropyl (ACP) group from S-adenosyl-L-methionine (SAM) to a histidine residue, the reaction is assisted by a reduction system comprising dph-3 and a NADH-dependent reductase, predominantly cbr-1. The protein is 2-(3-amino-3-carboxypropyl)histidine synthase subunit 1 (dph-1) of Neurospora crassa (strain ATCC 24698 / 74-OR23-1A / CBS 708.71 / DSM 1257 / FGSC 987).